A 396-amino-acid chain; its full sequence is Inhibitory POU protein (396 aa).

Residues 86-95 (RAEALAAVDI) carry the POU-IV box motif. The 78-residue stretch at 222 to 299 (DTDTDPRELE…ILQAWLEEAE (78 aa)) folds into the POU-specific domain. A disordered region spans residues 302–328 (AKNKRRDPDAPSVLPAGEKKRKRTSIA). Positions 320-377 (KKRKRTSIAAPEKRSLEAYFAVQPRPSGEKIAAIAEKLDLKKNVVRVWFCNQRQKQKR) form a DNA-binding region, homeobox; atypical.

Belongs to the POU transcription factor family. Class-4 subfamily. Coexpressed with vvl in overlapping subsets of neurons in the embryonic central nervous system. Expressed in olfactory neurons.

It is found in the nucleus. Functionally, modulates gene transcription; simultaneously generates both a specific activator and an inhibitor of gene transcription, capable of modulating two distinct regulatory programs during neural development. Has a role in olfactory behavior. This is Inhibitory POU protein (acj6) from Drosophila melanogaster (Fruit fly).